Here is a 277-residue protein sequence, read N- to C-terminus: Putative phosphoenolpyruvate synthase regulatory protein (277 aa).

Position 157–164 (157–164) interacts with ADP; the sequence is GVSRCGKT.

This sequence belongs to the pyruvate, phosphate/water dikinase regulatory protein family. PSRP subfamily.

It catalyses the reaction [pyruvate, water dikinase] + ADP = [pyruvate, water dikinase]-phosphate + AMP + H(+). The enzyme catalyses [pyruvate, water dikinase]-phosphate + phosphate + H(+) = [pyruvate, water dikinase] + diphosphate. Its function is as follows. Bifunctional serine/threonine kinase and phosphorylase involved in the regulation of the phosphoenolpyruvate synthase (PEPS) by catalyzing its phosphorylation/dephosphorylation. This is Putative phosphoenolpyruvate synthase regulatory protein from Erwinia tasmaniensis (strain DSM 17950 / CFBP 7177 / CIP 109463 / NCPPB 4357 / Et1/99).